Here is a 412-residue protein sequence, read N- to C-terminus: Class E basic helix-loop-helix protein 40 (412 aa).

An essential for interaction with BMAL1, E-box binding and repressor activity against the CLOCK-BMAL1 heterodimer region spans residues 1-139 (MERIPSAQPP…LSGRNVETGQ (139 aa)). Residues 52 to 107 (TYKLPHRLIEKKRRDRINECIAQLKDLLPEHLKLTTLGHLEKAVVLELTLKHVKAL) enclose the bHLH domain. The interval 75–79 (LKDLL) is necessary for interaction with RXRA and repressor activity against RXRA. Residues 142 to 175 (FCSGFQTCAREVLQYLAKHENTRDLKSSQLVTHL) form the Orange domain. K159 is covalently cross-linked (Glycyl lysine isopeptide (Lys-Gly) (interchain with G-Cter in SUMO1, SUMO2 and SUMO3)). K167 is covalently cross-linked (Glycyl lysine isopeptide (Lys-Gly) (interchain with G-Cter in SUMO2)). The interval 182–303 (LLQGGTSRKP…LSDDEGHFTS (122 aa)) is disordered. S235 carries the phosphoserine modification. Residues 248–271 (ESEKGDLRSEQPCFKSDHGRRFTM) show a composition bias toward basic and acidic residues. K279 participates in a covalent cross-link: Glycyl lysine isopeptide (Lys-Gly) (interchain with G-Cter in SUMO1); alternate. K279 participates in a covalent cross-link: Glycyl lysine isopeptide (Lys-Gly) (interchain with G-Cter in SUMO1, SUMO2 and SUMO3); alternate. K279 is covalently cross-linked (Glycyl lysine isopeptide (Lys-Gly) (interchain with G-Cter in SUMO2); alternate). K288 is covalently cross-linked (Glycyl lysine isopeptide (Lys-Gly) (interchain with G-Cter in SUMO2)). At S383 the chain carries Phosphoserine.

Homodimer. Heterodimer with BHLHE41/DEC2. Interacts with TCF3/E47. Interacts with ubiquitin-conjugating enzyme UBE2I/UBC9. Interacts with HDAC1, SUMO1, RXRA and BMAL1. Post-translationally, ubiquitinated; which may lead to proteasomal degradation. Sumoylation inhibits its ubiquitination and promotes its negative regulation of the CLOCK-BMAL1 heterodimer transcriptional activator activity. As to expression, expressed in cartilage, spleen, intestine, lung, and to a lesser extent in heart, brain, liver, muscle and stomach.

It localises to the cytoplasm. It is found in the nucleus. Its function is as follows. Transcriptional repressor involved in the regulation of the circadian rhythm by negatively regulating the activity of the clock genes and clock-controlled genes. Acts as the negative limb of a novel autoregulatory feedback loop (DEC loop) which differs from the one formed by the PER and CRY transcriptional repressors (PER/CRY loop). Both these loops are interlocked as it represses the expression of PER1/2 and in turn is repressed by PER1/2 and CRY1/2. Represses the activity of the circadian transcriptional activator: CLOCK-BMAL1|BMAL2 heterodimer by competing for the binding to E-box elements (5'-CACGTG-3') found within the promoters of its target genes. Negatively regulates its own expression and the expression of DBP and BHLHE41/DEC2. Acts as a corepressor of RXR and the RXR-LXR heterodimers and represses the ligand-induced RXRA and NR1H3/LXRA transactivation activity. May be involved in the regulation of chondrocyte differentiation via the cAMP pathway. Represses the transcription of NR0B2 and attentuates the transactivation of NR0B2 by the CLOCK-BMAL1 complex. Drives the circadian rhythm of blood pressure through transcriptional repression of ATP1B1 in the cardiovascular system. This Homo sapiens (Human) protein is Class E basic helix-loop-helix protein 40 (BHLHE40).